The primary structure comprises 510 residues: Aromatic-L-amino-acid decarboxylase (510 aa).

The span at 1-17 (MSHIPISNTIPTKQTDG) shows a compositional bias: polar residues. The tract at residues 1–28 (MSHIPISNTIPTKQTDGNGKANISPDKL) is disordered. Threonine 117 serves as a coordination point for substrate. Residues alanine 183, serine 184, histidine 227, aspartate 305, and asparagine 334 each coordinate pyridoxal 5'-phosphate. Residue histidine 227 coordinates substrate. Histidine 227 is a catalytic residue. Lysine 337 is subject to N6-(pyridoxal phosphate)lysine. The segment at 358–384 (NAFNVDPLYLKHDMQGSAPDYRHWQIP) is disordered.

It belongs to the group II decarboxylase family. In terms of assembly, homodimer. Requires pyridoxal 5'-phosphate as cofactor. In terms of tissue distribution, hypoderm isoform is expressed only in hypodermal epithelium and the CNS isoform only in central nervous system. Expressed in the adult head (at protein level).

The catalysed reaction is L-dopa + H(+) = dopamine + CO2. The enzyme catalyses 5-hydroxy-L-tryptophan + H(+) = serotonin + CO2. Catalyzes the decarboxylation of L-3,4-dihydroxyphenylalanine (L-DOPA) to dopamine and L-5-hydroxytryptophan (5-HTP) to serotonin. Catalyzes the formation of serotonin more efficiently than dopamine. Displays no activity to tyrosine. Variation in the synthesis of bioamines may be a factor contributing to natural variation in life span. The chain is Aromatic-L-amino-acid decarboxylase (Ddc) from Drosophila melanogaster (Fruit fly).